Here is a 438-residue protein sequence, read N- to C-terminus: Aspartate--tRNA(Asp/Asn) ligase (438 aa).

E176 contacts L-aspartate. Residues 198 to 201 are aspartate; sequence QLYK. Position 220 (R220) interacts with L-aspartate. Residues 220–222, 228–230, and E361 each bind ATP; these read RAE and RHL. 2 residues coordinate Mg(2+): E361 and S364. Residues S364 and R368 each coordinate L-aspartate. Residue 409 to 412 participates in ATP binding; it reads GADR.

This sequence belongs to the class-II aminoacyl-tRNA synthetase family. Type 2 subfamily. Homodimer. It depends on Mg(2+) as a cofactor.

The protein localises to the cytoplasm. The enzyme catalyses tRNA(Asx) + L-aspartate + ATP = L-aspartyl-tRNA(Asx) + AMP + diphosphate. Aspartyl-tRNA synthetase with relaxed tRNA specificity since it is able to aspartylate not only its cognate tRNA(Asp) but also tRNA(Asn). Reaction proceeds in two steps: L-aspartate is first activated by ATP to form Asp-AMP and then transferred to the acceptor end of tRNA(Asp/Asn). This is Aspartate--tRNA(Asp/Asn) ligase from Methanococcus maripaludis (strain C5 / ATCC BAA-1333).